The following is a 123-amino-acid chain: Fluoride-specific ion channel FluC 2 (123 aa).

Helical transmembrane passes span 1 to 21 (MTML…FLLD) and 30 to 50 (VPVP…LGLI). Gly-74 and Thr-77 together coordinate Na(+). Residues 99–119 (ALHCMGMAIAGVLAAILGLAL) traverse the membrane as a helical segment.

Belongs to the fluoride channel Fluc/FEX (TC 1.A.43) family.

It is found in the cell membrane. It catalyses the reaction fluoride(in) = fluoride(out). Na(+) is not transported, but it plays an essential structural role and its presence is essential for fluoride channel function. Fluoride-specific ion channel. Important for reducing fluoride concentration in the cell, thus reducing its toxicity. The protein is Fluoride-specific ion channel FluC 2 of Cutibacterium acnes (strain DSM 16379 / KPA171202) (Propionibacterium acnes).